The sequence spans 675 residues: DNA ligase (675 aa).

Residues 32 to 36 (DAEYD), 81 to 82 (SL), and glutamate 113 each bind NAD(+). Lysine 115 (N6-AMP-lysine intermediate) is an active-site residue. Arginine 136, glutamate 173, lysine 291, and lysine 315 together coordinate NAD(+). Residues cysteine 409, cysteine 412, cysteine 427, and cysteine 433 each coordinate Zn(2+). One can recognise a BRCT domain in the interval 595 to 675 (SEKTYFFNKK…ELNSLIRIKE (81 aa)).

Belongs to the NAD-dependent DNA ligase family. LigA subfamily. Mg(2+) serves as cofactor. Mn(2+) is required as a cofactor.

The catalysed reaction is NAD(+) + (deoxyribonucleotide)n-3'-hydroxyl + 5'-phospho-(deoxyribonucleotide)m = (deoxyribonucleotide)n+m + AMP + beta-nicotinamide D-nucleotide.. DNA ligase that catalyzes the formation of phosphodiester linkages between 5'-phosphoryl and 3'-hydroxyl groups in double-stranded DNA using NAD as a coenzyme and as the energy source for the reaction. It is essential for DNA replication and repair of damaged DNA. The polypeptide is DNA ligase (Buchnera aphidicola subsp. Acyrthosiphon pisum (strain APS) (Acyrthosiphon pisum symbiotic bacterium)).